Here is a 492-residue protein sequence, read N- to C-terminus: Glutamyl-tRNA(Gln) amidotransferase subunit A (492 aa).

Residues lysine 79 and serine 154 each act as charge relay system in the active site. The Acyl-ester intermediate role is filled by serine 178.

It belongs to the amidase family. GatA subfamily. In terms of assembly, heterotrimer of A, B and C subunits.

It catalyses the reaction L-glutamyl-tRNA(Gln) + L-glutamine + ATP + H2O = L-glutaminyl-tRNA(Gln) + L-glutamate + ADP + phosphate + H(+). Allows the formation of correctly charged Gln-tRNA(Gln) through the transamidation of misacylated Glu-tRNA(Gln) in organisms which lack glutaminyl-tRNA synthetase. The reaction takes place in the presence of glutamine and ATP through an activated gamma-phospho-Glu-tRNA(Gln). The sequence is that of Glutamyl-tRNA(Gln) amidotransferase subunit A from Acinetobacter baumannii (strain ATCC 17978 / DSM 105126 / CIP 53.77 / LMG 1025 / NCDC KC755 / 5377).